The sequence spans 108 residues: Phosphoribosyl-AMP cyclohydrolase (108 aa).

D78 provides a ligand contact to Mg(2+). C79 contacts Zn(2+). Positions 80 and 82 each coordinate Mg(2+). The Zn(2+) site is built by C95 and C102.

This sequence belongs to the PRA-CH family. In terms of assembly, homodimer. Mg(2+) is required as a cofactor. It depends on Zn(2+) as a cofactor.

The protein localises to the cytoplasm. It carries out the reaction 1-(5-phospho-beta-D-ribosyl)-5'-AMP + H2O = 1-(5-phospho-beta-D-ribosyl)-5-[(5-phospho-beta-D-ribosylamino)methylideneamino]imidazole-4-carboxamide. It participates in amino-acid biosynthesis; L-histidine biosynthesis; L-histidine from 5-phospho-alpha-D-ribose 1-diphosphate: step 3/9. Functionally, catalyzes the hydrolysis of the adenine ring of phosphoribosyl-AMP. The sequence is that of Phosphoribosyl-AMP cyclohydrolase from Cenarchaeum symbiosum (strain A).